The sequence spans 246 residues: 14-3-3 protein beta/alpha (246 aa).

M1 carries the post-translational modification N-acetylmethionine. N-acetylthreonine; in 14-3-3 protein beta/alpha, N-terminally processed is present on T2. T2 is subject to Phosphothreonine. Position 5 is an N6-acetyllysine (K5). Position 51 is an N6-acetyllysine; alternate (K51). K51 participates in a covalent cross-link: Glycyl lysine isopeptide (Lys-Gly) (interchain with G-Cter in SUMO2); alternate. The residue at position 60 (S60) is a Phosphoserine. K70 carries the N6-acetyllysine modification. 3'-nitrotyrosine occurs at positions 84 and 106. Residue K117 is modified to N6-acetyllysine. Phosphoserine is present on residues S186 and S232.

Belongs to the 14-3-3 family. In terms of assembly, homodimer. Interacts with SAMSN1 and PRKCE. Interacts with AKAP13. Interacts with SSH1 and TORC2/CRTC2. Interacts with ABL1; the interaction results in cytoplasmic location of ABL1 and inhibition of cABL-mediated apoptosis. Interacts with ROR2 (dimer); the interaction results in phosphorylation of YWHAB on tyrosine residues. Interacts with GAB2. Interacts with YAP1 (phosphorylated form). Interacts with the phosphorylated (by AKT1) form of SRPK2. Interacts with PKA-phosphorylated AANAT. Interacts with MYO1C. Interacts with SIRT2. Interacts with the 'Thr-369' phosphorylated form of DAPK2. Interacts with PI4KB, TBC1D22A and TBC1D22B. Interacts with the 'Ser-1134' and 'Ser-1161' phosphorylated form of SOS1. Interacts (via phosphorylated form) with YWHAB; this interaction occurs in a protein kinase AKT1-dependent manner. Interacts with SLITRK1. Interacts with SYNPO2 (phosphorylated form); YWHAB competes with ACTN2 for interaction with SYNPO2. Interacts with RIPOR2 (via phosphorylated form); this interaction occurs in a chemokine-dependent manner and does not compete for binding of RIPOR2 with RHOA nor blocks inhibition of RIPOR2-mediated RHOA activity. Interacts with MARK2 and MARK3. Interacts with TESK1; the interaction is dependent on the phosphorylation of TESK1 'Ser-439' and inhibits TESK1 kinase activity. Interacts with MEFV. Interacts with HDAC4. Interacts with ADAM22 (via C-terminus). In terms of processing, the alpha, brain-specific form differs from the beta form in being phosphorylated. Phosphorylated on Ser-60 by protein kinase C delta type catalytic subunit in a sphingosine-dependent fashion.

The protein localises to the cytoplasm. It is found in the melanosome. In terms of biological role, adapter protein implicated in the regulation of a large spectrum of both general and specialized signaling pathways. Binds to a large number of partners, usually by recognition of a phosphoserine or phosphothreonine motif. Binding generally results in the modulation of the activity of the binding partner. Negative regulator of osteogenesis. Blocks the nuclear translocation of the phosphorylated form (by AKT1) of SRPK2 and antagonizes its stimulatory effect on cyclin D1 expression resulting in blockage of neuronal apoptosis elicited by SRPK2. Negative regulator of signaling cascades that mediate activation of MAP kinases via AKAP13. The polypeptide is 14-3-3 protein beta/alpha (YWHAB) (Bos taurus (Bovine)).